We begin with the raw amino-acid sequence, 506 residues long: Putative amidase (506 aa).

Residues Lys121 and Ser196 each act as charge relay system in the active site. Catalysis depends on Ser220, which acts as the Acyl-ester intermediate.

Belongs to the amidase family.

It carries out the reaction a monocarboxylic acid amide + H2O = a monocarboxylate + NH4(+). In Synechocystis sp. (strain ATCC 27184 / PCC 6803 / Kazusa), this protein is Putative amidase.